Here is a 495-residue protein sequence, read N- to C-terminus: Dipeptide and tripeptide permease A (495 aa).

At 1 to 20 (MTTSALNPLRQPKPFYLIFS) the chain is on the cytoplasmic side. Residues 21–41 (IEFWERFGFYGLQGILAVYLV) traverse the membrane as a helical segment. At 42–51 (KALGLREADS) the chain is on the periplasmic side. Residues 52-72 (FTLFSSFIALVYGLIAVGGWL) form a helical membrane-spanning segment. The Cytoplasmic segment spans residues 73 to 81 (GDKVLGTKR). A run of 2 helical transmembrane segments spans residues 82–102 (TILL…ASSE) and 103–123 (HISL…LFKA). Over 124 to 145 (NPSSLLSKCYEENDPRLDGAFT) the chain is Periplasmic. Residues 146-166 (MYYMAINIGSLLSMLATPWLA) form a helical membrane-spanning segment. Topologically, residues 167 to 171 (DQFGY) are cytoplasmic. A helical transmembrane segment spans residues 172–192 (AHAFALSVVGMLITVANFILM). Over 193 to 209 (QGWVKNYGSDADFRTPR) the chain is Periplasmic. The chain crosses the membrane as a helical span at residues 210 to 230 (LSTWLAVLAGVVAACAAAALL). The Cytoplasmic segment spans residues 231 to 232 (LK). A helical transmembrane segment spans residues 233-253 (HEIIANVVLAVLSIGVVGLYV). At 254–266 (KETLLLKGAERKK) the chain is on the periplasmic side. A helical membrane pass occupies residues 267–287 (MIVAAILMLQATVFFVLYNQM). The Cytoplasmic portion of the chain corresponds to 288 to 312 (PLSLNFFAIHNTEHMLFGIPVQPEQ). A helical transmembrane segment spans residues 313 to 333 (FQSLNPFWIMLASPLLALCYN). Over 334–344 (KLGNRLPMPHK) the chain is Periplasmic. Residues 345 to 365 (FAIGMVLCAGAFLVLPLGAKY) traverse the membrane as a helical segment. Topologically, residues 366-375 (ANAQGLVSSN) are cytoplasmic. The helical transmembrane segment at 376 to 396 (WMVLSYLLQSVGELLISGLGL) threads the bilayer. The Periplasmic portion of the chain corresponds to 397 to 409 (AMVAQLVPQRLMG). A helical membrane pass occupies residues 410-430 (FIMGAWFLTSAASSVIAGWVA). The Cytoplasmic segment spans residues 431-451 (GLTAAPDNVTNPLATLEIYSR). A helical membrane pass occupies residues 452–472 (VFTQIGVVTGVIAVVTIIIAP). Topologically, residues 473–495 (WLHRMTLDEKPAHPEHEMALDAR) are periplasmic.

The protein belongs to the major facilitator superfamily. Proton-dependent oligopeptide transporter (POT/PTR) (TC 2.A.17) family. DtpA subfamily.

It is found in the cell inner membrane. Functionally, proton-dependent permease that transports di- and tripeptides. This Chromobacterium violaceum (strain ATCC 12472 / DSM 30191 / JCM 1249 / CCUG 213 / NBRC 12614 / NCIMB 9131 / NCTC 9757 / MK) protein is Dipeptide and tripeptide permease A.